The following is a 736-amino-acid chain: 3',5'-cyclic-AMP phosphodiesterase 4B (736 aa).

Disordered regions lie at residues 51 to 78 (QLPP…TTLP), 189 to 209 (LHGT…SRVN), and 282 to 301 (KQND…KKKK). S290 carries the post-translational modification Phosphoserine. In terms of domain architecture, PDEase spans 330–659 (VNTENEDHLA…NWYQSMIPQS (330 aa)). Residue H406 is the Proton donor of the active site. 3',5'-cyclic AMP is bound at residue H406. H406 and H410 together coordinate AMP. Residues H410, H446, D447, and D564 each coordinate Zn(2+). Positions 447, 564, 615, and 618 each coordinate AMP. D447 is a binding site for Mg(2+). Mn(2+) is bound at residue D447. 3',5'-cyclic AMP-binding residues include Q615 and F618. Phosphoserine is present on residues S659 and S661. A disordered region spans residues 685-736 (DEEDSEGPEKEGEGHSYFSSTKTLCVIDPENRDSLGETDIDIATEDKSPVDT).

Belongs to the cyclic nucleotide phosphodiesterase family. PDE4 subfamily. As to quaternary structure, interacts with DISC1. Requires Zn(2+) as cofactor. It depends on Mg(2+) as a cofactor. The cofactor is Mn(2+). Expressed in brain, heart, lung and skeletal muscle. Expressed in white blood cells. As to expression, brain-specific isoform.

The protein resides in the cytoplasm. The protein localises to the cell membrane. It catalyses the reaction 3',5'-cyclic AMP + H2O = AMP + H(+). The protein operates within purine metabolism; 3',5'-cyclic AMP degradation; AMP from 3',5'-cyclic AMP: step 1/1. Its activity is regulated as follows. Inhibited by rolipram. In terms of biological role, hydrolyzes the second messenger cAMP, which is a key regulator of many important physiological processes. May be involved in mediating central nervous system effects of therapeutic agents ranging from antidepressants to antiasthmatic and anti-inflammatory agents. The chain is 3',5'-cyclic-AMP phosphodiesterase 4B from Homo sapiens (Human).